We begin with the raw amino-acid sequence, 504 residues long: Apolipoprotein N-acyltransferase (504 aa).

Helical transmembrane passes span 6–26 (LALT…YALV), 47–67 (ALYG…WVFV), 83–103 (LTAL…WLGV), 105–125 (AGGG…WVVT), 153–173 (IAPV…AGLL), and 186–206 (FALL…KVQW). Residues 219–457 (LQGNVPQDQK…REALTGMMQP (239 aa)) form the CN hydrolase domain. The active-site Proton acceptor is the Glu-258. Residue Lys-317 is part of the active site. The Nucleophile role is filled by Cys-369. Residues 465–485 (ALWGDWPAIGLCAGIVGICFA) traverse the membrane as a helical segment.

The protein belongs to the CN hydrolase family. Apolipoprotein N-acyltransferase subfamily.

It is found in the cell inner membrane. It catalyses the reaction N-terminal S-1,2-diacyl-sn-glyceryl-L-cysteinyl-[lipoprotein] + a glycerophospholipid = N-acyl-S-1,2-diacyl-sn-glyceryl-L-cysteinyl-[lipoprotein] + a 2-acyl-sn-glycero-3-phospholipid + H(+). The protein operates within protein modification; lipoprotein biosynthesis (N-acyl transfer). Functionally, catalyzes the phospholipid dependent N-acylation of the N-terminal cysteine of apolipoprotein, the last step in lipoprotein maturation. This Methylococcus capsulatus (strain ATCC 33009 / NCIMB 11132 / Bath) protein is Apolipoprotein N-acyltransferase.